The primary structure comprises 254 residues: uncharacterized protein (254 aa).

An S4 RNA-binding domain is found at 14-81 (IRLQKVLSQA…DSLVYLALNK (68 aa)). Aspartate 119 functions as the Nucleophile in the catalytic mechanism.

It belongs to the pseudouridine synthase RsuA family.

It catalyses the reaction a uridine in RNA = a pseudouridine in RNA. This is an uncharacterized protein from Mycobacterium bovis (strain ATCC BAA-935 / AF2122/97).